Here is an 89-residue protein sequence, read N- to C-terminus: Small ribosomal subunit protein uS15 (89 aa).

Belongs to the universal ribosomal protein uS15 family. As to quaternary structure, part of the 30S ribosomal subunit. Forms a bridge to the 50S subunit in the 70S ribosome, contacting the 23S rRNA.

Functionally, one of the primary rRNA binding proteins, it binds directly to 16S rRNA where it helps nucleate assembly of the platform of the 30S subunit by binding and bridging several RNA helices of the 16S rRNA. Its function is as follows. Forms an intersubunit bridge (bridge B4) with the 23S rRNA of the 50S subunit in the ribosome. This chain is Small ribosomal subunit protein uS15, found in Azorhizobium caulinodans (strain ATCC 43989 / DSM 5975 / JCM 20966 / LMG 6465 / NBRC 14845 / NCIMB 13405 / ORS 571).